Reading from the N-terminus, the 195-residue chain is Small ribosomal subunit protein uS4c (195 aa).

The S4 RNA-binding domain occupies 82–143 (MRLDNILFRL…KQRSKALIQN (62 aa)).

This sequence belongs to the universal ribosomal protein uS4 family. Part of the 30S ribosomal subunit. Contacts protein S5. The interaction surface between S4 and S5 is involved in control of translational fidelity.

Its subcellular location is the plastid. The protein resides in the chloroplast. In terms of biological role, one of the primary rRNA binding proteins, it binds directly to 16S rRNA where it nucleates assembly of the body of the 30S subunit. Its function is as follows. With S5 and S12 plays an important role in translational accuracy. The protein is Small ribosomal subunit protein uS4c (rps4) of Watsonia angusta.